Here is a 248-residue protein sequence, read N- to C-terminus: 1-(5-phosphoribosyl)-5-[(5-phosphoribosylamino)methylideneamino] imidazole-4-carboxamide isomerase (248 aa).

Asp8 functions as the Proton acceptor in the catalytic mechanism. The active-site Proton donor is Asp131.

The protein belongs to the HisA/HisF family.

The protein localises to the cytoplasm. It catalyses the reaction 1-(5-phospho-beta-D-ribosyl)-5-[(5-phospho-beta-D-ribosylamino)methylideneamino]imidazole-4-carboxamide = 5-[(5-phospho-1-deoxy-D-ribulos-1-ylimino)methylamino]-1-(5-phospho-beta-D-ribosyl)imidazole-4-carboxamide. Its pathway is amino-acid biosynthesis; L-histidine biosynthesis; L-histidine from 5-phospho-alpha-D-ribose 1-diphosphate: step 4/9. This Cupriavidus necator (strain ATCC 17699 / DSM 428 / KCTC 22496 / NCIMB 10442 / H16 / Stanier 337) (Ralstonia eutropha) protein is 1-(5-phosphoribosyl)-5-[(5-phosphoribosylamino)methylideneamino] imidazole-4-carboxamide isomerase.